A 579-amino-acid chain; its full sequence is Putative diflavin flavoprotein A 2 (579 aa).

The segment at Gln-50–His-243 is zinc metallo-hydrolase. 6 residues coordinate Fe cation: His-99, Glu-101, Asp-103, His-166, Asp-185, and His-243. One can recognise a Flavodoxin-like domain in the interval Val-272–Ser-460. A flavodoxin-reductase-like region spans residues Leu-461–Tyr-579.

The protein in the N-terminal section; belongs to the zinc metallo-hydrolase group 3 family. It in the C-terminal section; belongs to the flavodoxin reductase family. Requires Fe cation as cofactor.

Functionally, mediates electron transfer from NADH to oxygen, reducing it to water. This modular protein has 3 redox cofactors, in other organisms the same activity requires 2 or 3 proteins. This chain is Putative diflavin flavoprotein A 2 (dfa2), found in Nostoc sp. (strain PCC 7120 / SAG 25.82 / UTEX 2576).